We begin with the raw amino-acid sequence, 496 residues long: 3-octaprenyl-4-hydroxybenzoate carboxy-lyase (496 aa).

Residue N181 participates in Mn(2+) binding. Residues 184–186, 198–200, and 203–204 each bind prenylated FMN; these read IYR, RWL, and RG. Residue E247 coordinates Mn(2+). The active-site Proton donor is the D296.

Belongs to the UbiD family. In terms of assembly, homohexamer. Prenylated FMN is required as a cofactor. Requires Mn(2+) as cofactor.

The protein localises to the cell membrane. It catalyses the reaction a 4-hydroxy-3-(all-trans-polyprenyl)benzoate + H(+) = a 2-(all-trans-polyprenyl)phenol + CO2. Its pathway is cofactor biosynthesis; ubiquinone biosynthesis. In terms of biological role, catalyzes the decarboxylation of 3-octaprenyl-4-hydroxy benzoate to 2-octaprenylphenol, an intermediate step in ubiquinone biosynthesis. This is 3-octaprenyl-4-hydroxybenzoate carboxy-lyase from Azoarcus sp. (strain BH72).